We begin with the raw amino-acid sequence, 66 residues long: Large ribosomal subunit protein bL35 (66 aa).

Basic residues-rich tracts occupy residues 1-15 and 22-43; these read MSKLKTRSSAAKRFK and ILHKKAGKRHNLSKKSESRKRR. A disordered region spans residues 1-43; that stretch reads MSKLKTRSSAAKRFKVTATGKILHKKAGKRHNLSKKSESRKRR.

It belongs to the bacterial ribosomal protein bL35 family.

This Dictyoglomus turgidum (strain DSM 6724 / Z-1310) protein is Large ribosomal subunit protein bL35.